The sequence spans 729 residues: Palmitoyltransferase akr1 (729 aa).

Residues Met-1 to Ala-11 show a composition bias toward basic and acidic residues. The tract at residues Met-1–Pro-28 is disordered. Topologically, residues Met-1–Thr-297 are cytoplasmic. ANK repeat units lie at residues Glu-76–Lys-105, Ser-110–Ile-139, Gln-143–Val-172, Tyr-176–Ala-205, and Gln-209–Ala-238. Transmembrane regions (helical) follow at residues Phe-298–Phe-318 and Val-319–Ile-339. Over Ala-340 to Trp-354 the chain is Cytoplasmic. A helical transmembrane segment spans residues Met-355–Phe-375. At Gly-376 to Asp-383 the chain is on the lumenal side. The helical transmembrane segment at Ser-384–Ile-404 threads the bilayer. The Cytoplasmic segment spans residues Arg-405 to Arg-483. In terms of domain architecture, DHHC spans Asn-440–Ile-490. Catalysis depends on Cys-470, which acts as the S-palmitoyl cysteine intermediate. Residues His-484–Tyr-504 form a helical membrane-spanning segment. Over Arg-505–Tyr-534 the chain is Lumenal. The helical transmembrane segment at Ser-535–Val-555 threads the bilayer. Residues Gln-556–Val-729 lie on the Cytoplasmic side of the membrane. Disordered regions lie at residues Ser-587–Asn-620 and Thr-709–Val-729. The span at Leu-592–Ser-603 shows a compositional bias: pro residues. Positions His-611–Asn-620 are enriched in basic residues.

Belongs to the DHHC palmitoyltransferase family. AKR/ZDHHC17 subfamily.

Its subcellular location is the early endosome membrane. It localises to the golgi apparatus membrane. It carries out the reaction L-cysteinyl-[protein] + hexadecanoyl-CoA = S-hexadecanoyl-L-cysteinyl-[protein] + CoA. Palmitoyltransferase specific for casein kinase 1. The sequence is that of Palmitoyltransferase akr1 (ptr-1) from Neurospora crassa (strain ATCC 24698 / 74-OR23-1A / CBS 708.71 / DSM 1257 / FGSC 987).